We begin with the raw amino-acid sequence, 258 residues long: Acyl-[acyl-carrier-protein]--UDP-N-acetylglucosamine O-acyltransferase (258 aa).

It belongs to the transferase hexapeptide repeat family. LpxA subfamily. Homotrimer.

The protein localises to the cytoplasm. The catalysed reaction is a (3R)-hydroxyacyl-[ACP] + UDP-N-acetyl-alpha-D-glucosamine = a UDP-3-O-[(3R)-3-hydroxyacyl]-N-acetyl-alpha-D-glucosamine + holo-[ACP]. The protein operates within glycolipid biosynthesis; lipid IV(A) biosynthesis; lipid IV(A) from (3R)-3-hydroxytetradecanoyl-[acyl-carrier-protein] and UDP-N-acetyl-alpha-D-glucosamine: step 1/6. Involved in the biosynthesis of lipid A, a phosphorylated glycolipid that anchors the lipopolysaccharide to the outer membrane of the cell. The polypeptide is Acyl-[acyl-carrier-protein]--UDP-N-acetylglucosamine O-acyltransferase (Thermodesulfovibrio yellowstonii (strain ATCC 51303 / DSM 11347 / YP87)).